We begin with the raw amino-acid sequence, 236 residues long: Eukaryotic translation initiation factor 3 subunit J (236 aa).

The tract at residues 1–88 is disordered; sequence MADDWESAAD…EAEAQRVASL (88 aa). Residues 28–46 show a composition bias toward acidic residues; that stretch reads GEDEDEDIKDSWEDEEEKK. Basic and acidic residues-rich tracts occupy residues 47-58 and 68-77; these read DEEKPTKTEAPA and AKLEQQARLE.

Belongs to the eIF-3 subunit J family. Component of the eukaryotic translation initiation factor 3 (eIF-3) complex. The eIF-3 complex interacts with pix.

The protein resides in the cytoplasm. In terms of biological role, component of the eukaryotic translation initiation factor 3 (eIF-3) complex, which is involved in protein synthesis of a specialized repertoire of mRNAs and, together with other initiation factors, stimulates binding of mRNA and methionyl-tRNAi to the 40S ribosome. The eIF-3 complex specifically targets and initiates translation of a subset of mRNAs involved in cell proliferation. The sequence is that of Eukaryotic translation initiation factor 3 subunit J from Drosophila erecta (Fruit fly).